Reading from the N-terminus, the 243-residue chain is Tyrosine-protein phosphatase CpsB (243 aa).

Belongs to the metallo-dependent hydrolases superfamily. CpsB/CapC family. Mn(2+) serves as cofactor.

The catalysed reaction is O-phospho-L-tyrosyl-[protein] + H2O = L-tyrosyl-[protein] + phosphate. Its pathway is capsule biogenesis; capsule polysaccharide biosynthesis. Dephosphorylates CpsD. Involved in the regulation of capsular polysaccharide biosynthesis. This Streptococcus pneumoniae serotype 4 (strain ATCC BAA-334 / TIGR4) protein is Tyrosine-protein phosphatase CpsB (cpsB).